Reading from the N-terminus, the 154-residue chain is Pro-corazonin (154 aa).

The first 19 residues, M1–G19, serve as a signal peptide directing secretion. The residue at position 20 (Q20) is a Pyrrolidone carboxylic acid. An Asparagine amide modification is found at N30. Residues L70–H154 constitute a propeptide that is removed on maturation.

This sequence belongs to the corazonin family. In terms of tissue distribution, expression is restricted to 24 neurons in the larval CNS (8 in the brain and 16 in the ventral nerve cord) and 12-16 neurons in the pars lateralis of the adult brain.

It is found in the secreted. Cardioactive peptide. Corazonin is probably involved in the physiological regulation of the heart beat. Clock (Clk) and cycle (cyc) proteins negatively regulate Crz transcription in a cell-specific manner. This chain is Pro-corazonin (Crz), found in Drosophila simulans (Fruit fly).